A 146-amino-acid chain; its full sequence is Hemoglobin subunit beta (146 aa).

Valine 1 bears the N-acetylvaline mark. Positions 2–146 (HLTGEEKSTV…VATALAHKYH (145 aa)) constitute a Globin domain. Residue serine 44 is modified to Phosphoserine. Position 59 is an N6-acetyllysine (lysine 59). A heme b-binding site is contributed by histidine 63. N6-acetyllysine is present on lysine 82. Histidine 92 serves as a coordination point for heme b. At cysteine 93 the chain carries S-nitrosocysteine. Lysine 144 carries the post-translational modification N6-acetyllysine.

This sequence belongs to the globin family. As to quaternary structure, heterotetramer of two alpha chains and two beta chains. As to expression, red blood cells.

Its function is as follows. Involved in oxygen transport from the lung to the various peripheral tissues. This Macrotus californicus (Californian leaf-nosed bat) protein is Hemoglobin subunit beta (HBB).